Here is a 223-residue protein sequence, read N- to C-terminus: DNA mismatch repair protein MutH (223 aa).

The protein belongs to the MutH family.

Its subcellular location is the cytoplasm. In terms of biological role, sequence-specific endonuclease that cleaves unmethylated GATC sequences. It is involved in DNA mismatch repair. This chain is DNA mismatch repair protein MutH, found in Shewanella baltica (strain OS223).